The following is a 151-amino-acid chain: Myosin light polypeptide 6 (151 aa).

Cysteine 2 bears the N-acetylcysteine mark. Residues 7–42 enclose the EF-hand 1 domain; it reads DQTAEFKEAFQLFDRTGDGKILYSQCGDVMRALGQN. Position 57 is a phosphoserine (serine 57). N6-acetyllysine is present on lysine 81. 2 EF-hand domains span residues 84 to 119 and 119 to 151; these read GTYE…LGEK and KMTE…VLNG.

As to quaternary structure, myosin is a hexamer of 2 heavy chains and 4 light chains. Interacts with SPATA6.

In terms of biological role, regulatory light chain of myosin. Does not bind calcium. This is Myosin light polypeptide 6 (Myl6) from Rattus norvegicus (Rat).